The sequence spans 261 residues: Hydroxyethylthiazole kinase (261 aa).

M40 is a binding site for substrate. ATP is bound by residues K116 and T162. G189 contributes to the substrate binding site.

Belongs to the Thz kinase family. Mg(2+) is required as a cofactor.

It catalyses the reaction 5-(2-hydroxyethyl)-4-methylthiazole + ATP = 4-methyl-5-(2-phosphooxyethyl)-thiazole + ADP + H(+). It functions in the pathway cofactor biosynthesis; thiamine diphosphate biosynthesis; 4-methyl-5-(2-phosphoethyl)-thiazole from 5-(2-hydroxyethyl)-4-methylthiazole: step 1/1. In terms of biological role, catalyzes the phosphorylation of the hydroxyl group of 4-methyl-5-beta-hydroxyethylthiazole (THZ). The polypeptide is Hydroxyethylthiazole kinase (Methanosarcina acetivorans (strain ATCC 35395 / DSM 2834 / JCM 12185 / C2A)).